Here is a 327-residue protein sequence, read N- to C-terminus: Probable cell division protein WhiA (327 aa).

The H-T-H motif DNA-binding region spans 275-308 (SLEELGQLADPPMTKDAVAGRIRRLLSMADRKAK). Residues 306–327 (KAKETGIPDTESAVTADLLDDA) are disordered.

The protein belongs to the WhiA family.

Its function is as follows. Involved in cell division and chromosome segregation. The protein is Probable cell division protein WhiA of Rhodococcus jostii (strain RHA1).